Consider the following 43-residue polypeptide: Mu-conotoxin-like Cal 12.2c (43 aa).

Residue Arg-1 is a propeptide. Cystine bridges form between Cys-4/Cys-16, Cys-11/Cys-24, Cys-18/Cys-29, and Cys-23/Cys-35. Trp-31 bears the 6'-bromotryptophan mark. Residue Pro-36 is modified to 4-hydroxyproline. A 6'-bromotryptophan modification is found at Trp-40.

In terms of tissue distribution, expressed by the venom duct.

It is found in the secreted. Mu-conotoxins block voltage-gated sodium channels. This toxin reversibly blocks voltage-gated sodium channel in cephalopods, with no alteration in the voltage dependence of sodium conductance or on the kinetics of inactivation. The polypeptide is Mu-conotoxin-like Cal 12.2c (Californiconus californicus (California cone)).